Here is a 234-residue protein sequence, read N- to C-terminus: Large ribosomal subunit protein uL1 (234 aa).

Belongs to the universal ribosomal protein uL1 family. As to quaternary structure, part of the 50S ribosomal subunit.

Its function is as follows. Binds directly to 23S rRNA. The L1 stalk is quite mobile in the ribosome, and is involved in E site tRNA release. Protein L1 is also a translational repressor protein, it controls the translation of the L11 operon by binding to its mRNA. The protein is Large ribosomal subunit protein uL1 of Baumannia cicadellinicola subsp. Homalodisca coagulata.